A 907-amino-acid chain; its full sequence is DNA (cytosine-5)-methyltransferase CMT3 (907 aa).

The span at 1-15 shows a compositional bias: low complexity; the sequence is MAPSSPSSAAAPTRT. The tract at residues 1–154 is disordered; the sequence is MAPSSPSSAA…RNAATRRPDE (154 aa). The segment covering 30–63 has biased composition (basic and acidic residues); that stretch reads ATDEPSTKRTRRPKAETKPRKKKDEVKEEEKPPM. A compositionally biased stretch (acidic residues) spans 64–89; the sequence is EDDACGEEPDAEEMALGEEAEAEEAE. Basic and acidic residues-rich tracts occupy residues 115 to 124 and 131 to 140; these read HGSDGDHDPE and PAKEARDKWP. The region spanning 172–297 is the BAH domain; the sequence is TLYCLHDDVY…VAYSTFANIP (126 aa). Positions 303–323 are disordered; sequence SGSDTASDISSDDVDSSKGKV. The region spanning 335 to 868 is the SAM-dependent MTase C5-type domain; it reads ATLLDLYSGC…YSLGLAYQRE (534 aa). The Chromo domain occupies 437–500; that stretch reads FVVEKLAGIC…EGYRRKILPL (64 aa). Cys513 is an active-site residue.

It belongs to the class I-like SAM-binding methyltransferase superfamily. C5-methyltransferase family.

Its subcellular location is the nucleus. It catalyses the reaction a 2'-deoxycytidine in DNA + S-adenosyl-L-methionine = a 5-methyl-2'-deoxycytidine in DNA + S-adenosyl-L-homocysteine + H(+). Involved in CpXpG DNA methylation. Plays a critical role in the maintenance of CpXpG DNA methylation and suppression of a wide spectrum of transposable element (TE) activities. Required for proper plant development in reproductive stage. The protein is DNA (cytosine-5)-methyltransferase CMT3 of Oryza sativa subsp. japonica (Rice).